Consider the following 429-residue polypeptide: Nucleotide exchange factor Sil1 (429 aa).

The first 24 residues, 1–24 (MSGKQVVILLGSVLILGCLQVAAA), serve as a signal peptide directing secretion. Residue asparagine 29 is glycosylated (N-linked (GlcNAc...) asparagine). A disordered region spans residues 70–98 (DESERGTSLQSQPDDQNARESHDDNEPLA). Over residues 75–84 (GTSLQSQPDD) the composition is skewed to polar residues. A compositionally biased stretch (basic and acidic residues) spans 85–94 (QNARESHDDN). Positions 104–135 (DIIEESIRRVKEQKKSYAELRKAYKEFQKNFR) form a coiled coil. N-linked (GlcNAc...) asparagine glycosylation is found at asparagine 150, asparagine 199, and asparagine 400. Positions 426-429 (HTEL) match the Prevents secretion from ER motif.

The protein belongs to the SIL1 family.

It localises to the endoplasmic reticulum lumen. Functionally, required for protein translocation and folding in the endoplasmic reticulum (ER). Functions as a nucleotide exchange factor for an ER lumenal chaperone of HSP70 family. This chain is Nucleotide exchange factor Sil1, found in Drosophila melanogaster (Fruit fly).